A 251-amino-acid chain; its full sequence is Hydroxyacylglutathione hydrolase (251 aa).

Zn(2+) is bound by residues histidine 53, histidine 55, aspartate 57, histidine 58, histidine 109, aspartate 126, and histidine 164.

This sequence belongs to the metallo-beta-lactamase superfamily. Glyoxalase II family. In terms of assembly, monomer. Zn(2+) serves as cofactor.

It catalyses the reaction an S-(2-hydroxyacyl)glutathione + H2O = a 2-hydroxy carboxylate + glutathione + H(+). Its pathway is secondary metabolite metabolism; methylglyoxal degradation; (R)-lactate from methylglyoxal: step 2/2. Functionally, thiolesterase that catalyzes the hydrolysis of S-D-lactoyl-glutathione to form glutathione and D-lactic acid. This chain is Hydroxyacylglutathione hydrolase, found in Wigglesworthia glossinidia brevipalpis.